A 149-amino-acid chain; its full sequence is Large ribosomal subunit protein uL13 (149 aa).

This sequence belongs to the universal ribosomal protein uL13 family. As to quaternary structure, part of the 50S ribosomal subunit.

Functionally, this protein is one of the early assembly proteins of the 50S ribosomal subunit, although it is not seen to bind rRNA by itself. It is important during the early stages of 50S assembly. The protein is Large ribosomal subunit protein uL13 of Thermotoga maritima (strain ATCC 43589 / DSM 3109 / JCM 10099 / NBRC 100826 / MSB8).